The primary structure comprises 241 residues: Adenylate kinase 3 (241 aa).

Position 38–43 (38–43 (GCGKGT)) interacts with ATP. The NMP stretch occupies residues 58–87 (ATGDMLRAAVAAKTPLGIKAKEAMDKGELV). AMP is bound by residues Thr59, Arg64, 85–87 (ELV), 113–116 (GFPR), and Gln120. An LID region spans residues 154–191 (GRWIHPSSGRSYHTKFAPPKTPGLDDVTGEPLIQRKDD). Arg155 lines the ATP pocket. AMP contacts are provided by Arg188 and Arg199.

Belongs to the adenylate kinase family.

The protein localises to the cytoplasm. It catalyses the reaction AMP + ATP = 2 ADP. Functionally, catalyzes the reversible transfer of the terminal phosphate group between ATP and AMP. Plays an important role in cellular energy homeostasis and in adenine nucleotide metabolism. This Oryza sativa subsp. japonica (Rice) protein is Adenylate kinase 3 (ADK-A).